Reading from the N-terminus, the 448-residue chain is Probable malate:quinone oxidoreductase (448 aa).

It belongs to the MQO family. FAD serves as cofactor.

The catalysed reaction is (S)-malate + a quinone = a quinol + oxaloacetate. Its pathway is carbohydrate metabolism; tricarboxylic acid cycle; oxaloacetate from (S)-malate (quinone route): step 1/1. Functionally, catalyzes oxidation of malate to oxaloacetate in the citric acid cycle. Donates electrons to quinones of the electron transfer chain. This Campylobacter jejuni subsp. jejuni serotype O:2 (strain ATCC 700819 / NCTC 11168) protein is Probable malate:quinone oxidoreductase (mqo).